Here is a 594-residue protein sequence, read N- to C-terminus: MADLLSSLKNLPNSSGVYQYFDKNRQLLYIGKAKNLKKRIKSYFSICNNEITPNHRASLRIQMMVKQIAFLETILVENEQDALILENSLIKQLKPKYNILLRDDKTYPYIYMDFSTDFPIPLITRKILKQPGVKYFGPFTSGAKDILDSLYELLPLVQKKNCIKDKKACMFYQIERCKAPCEDKITKEEYLKIAKECLEMIENKDRLIKELELKMERLSSNLRFEEALIYRDRIAKIQKIAPFTCMDLAKLYDLDIFAFYGASNKAVLVKMFMRGGKIISSAFEKIHSLNGFDTDEAMKQAIINHYQSHLPLIPEQILLNACSNEALKELQEFISHQYSKKIALSIPKKGDKLALIEIAMKNAQEIFSQEKTSNEDLILEEVRSLFNLECVPYRVEIFDTSHHANSQCVGGMVVYENNEFQKDSYRRYHLKGSNEYAQMSELLTRRALDFAKEPPPNLWVIDGGRAQLNIALEILKSSGSFVEVIAISKEKRDSKAYRSKGGAKDIIHTPSDTFKLLPSDKRLQWVQKLRDESHRYAINFHRSTKLKNMKQIALLKEKGIGEASVKKLLDYFGSFEAIEKASEQEKNAVLKKRI.

The GIY-YIG domain maps to 13–99 (NSSGVYQYFD…IKQLKPKYNI (87 aa)). In terms of domain architecture, UVR spans 205-240 (DRLIKELELKMERLSSNLRFEEALIYRDRIAKIQKI).

It belongs to the UvrC family. In terms of assembly, interacts with UvrB in an incision complex.

It is found in the cytoplasm. Its function is as follows. The UvrABC repair system catalyzes the recognition and processing of DNA lesions. UvrC both incises the 5' and 3' sides of the lesion. The N-terminal half is responsible for the 3' incision and the C-terminal half is responsible for the 5' incision. The protein is UvrABC system protein C of Helicobacter pylori (strain G27).